A 440-amino-acid polypeptide reads, in one-letter code: Transposon Ty1-ML1 Gag polyprotein (440 aa).

Composition is skewed to polar residues over residues 1–23 (MESQ…SVTS), 48–60 (TKAN…TPAS), and 127–152 (QSQF…GNTF). Disordered regions lie at residues 1–88 (MESQ…YPQQ), 126–173 (PQSQ…RPPP), and 352–440 (GSRN…PETY). The span at 153–165 (TDSSSADSDMTST) shows a compositional bias: low complexity. Positions 299 to 401 (NNGIHINNKV…NSKSKTARAH (103 aa)) are RNA-binding. Low complexity predominate over residues 402-418 (NVSTSNNSPSTDNDSIS). Ser416 is modified (phosphoserine). Over residues 419-428 (KSTTEPIQLN) the composition is skewed to polar residues. Positions 429 to 440 (NKHDLHLRPETY) are enriched in basic and acidic residues.

Homotrimer.

Its subcellular location is the cytoplasm. Functionally, capsid protein (CA) is the structural component of the virus-like particle (VLP), forming the shell that encapsulates the retrotransposons dimeric RNA genome. The particles are assembled from trimer-clustered units and there are holes in the capsid shells that allow for the diffusion of macromolecules. CA also has nucleocapsid-like chaperone activity, promoting primer tRNA(i)-Met annealing to the multipartite primer-binding site (PBS), dimerization of Ty1 RNA and initiation of reverse transcription. The sequence is that of Transposon Ty1-ML1 Gag polyprotein (TY1A-ML1) from Saccharomyces cerevisiae (strain ATCC 204508 / S288c) (Baker's yeast).